The primary structure comprises 227 residues: PKHD-type hydroxylase Neut_0373 (227 aa).

One can recognise a Fe2OG dioxygenase domain in the interval 78–179 (KIMPPFFNRY…RIACFMFIQS (102 aa)). The Fe cation site is built by His-97, Asp-99, and His-160. Arg-170 is a 2-oxoglutarate binding site.

It depends on Fe(2+) as a cofactor. L-ascorbate is required as a cofactor.

The protein is PKHD-type hydroxylase Neut_0373 of Nitrosomonas eutropha (strain DSM 101675 / C91 / Nm57).